The primary structure comprises 148 residues: Large ribosomal subunit protein uL16 (148 aa).

Belongs to the universal ribosomal protein uL16 family. Part of the 50S ribosomal subunit.

Binds 23S rRNA and is also seen to make contacts with the A and possibly P site tRNAs. In Gloeobacter violaceus (strain ATCC 29082 / PCC 7421), this protein is Large ribosomal subunit protein uL16.